The sequence spans 439 residues: Glutamine synthetase (439 aa).

The 82-residue stretch at 12–93 folds into the GS beta-grasp domain; the sequence is RSPKFVQLIF…VYGYIYKDGK (82 aa). The GS catalytic domain occupies 99 to 439; it reads PRGVLKRVIE…EWELERYFFI (341 aa). Positions 122 and 124 each coordinate Mg(2+). Glu-172 is a binding site for ATP. 2 residues coordinate Mg(2+): Glu-177 and Glu-184. Gly-229 provides a ligand contact to L-glutamate. His-233 is a Mg(2+) binding site. Residues 235–237 and Ser-237 contribute to the ATP site; that span reads HIS. L-glutamate-binding residues include Arg-283, Glu-289, and Arg-301. The ATP site is built by Arg-301 and Arg-306. Glu-318 contacts Mg(2+). Arg-320 serves as a coordination point for L-glutamate.

This sequence belongs to the glutamine synthetase family. In terms of assembly, oligomer of 12 subunits arranged in the form of two hexagons. The cofactor is Mg(2+).

It localises to the cytoplasm. It carries out the reaction L-glutamate + NH4(+) + ATP = L-glutamine + ADP + phosphate + H(+). In terms of biological role, probably involved in nitrogen metabolism via ammonium assimilation. Catalyzes the ATP-dependent biosynthesis of glutamine from glutamate and ammonia. The protein is Glutamine synthetase of Pyrococcus abyssi (strain GE5 / Orsay).